Consider the following 141-residue polypeptide: Hemoglobin subunit alpha (141 aa).

Residues 1–141 enclose the Globin domain; sequence VLSPADKTNV…VSTVLTSKYR (141 aa). Position 3 is a phosphoserine (serine 3). Lysine 7 bears the N6-succinyllysine mark. A Phosphothreonine modification is found at threonine 8. Lysine 11 is modified (N6-succinyllysine). Lysine 16 carries the post-translational modification N6-acetyllysine; alternate. Position 16 is an N6-succinyllysine; alternate (lysine 16). Tyrosine 24 is modified (phosphotyrosine). At serine 35 the chain carries Phosphoserine. At lysine 40 the chain carries N6-succinyllysine. The residue at position 49 (serine 49) is a Phosphoserine. Position 58 (histidine 58) interacts with O2. Heme b is bound at residue histidine 87. Phosphoserine is present on serine 102. Position 108 is a phosphothreonine (threonine 108). Serine 124 is modified (phosphoserine). A phosphothreonine mark is found at threonine 134 and threonine 137. Serine 138 carries the post-translational modification Phosphoserine.

It belongs to the globin family. As to quaternary structure, heterotetramer of two alpha chains and two beta chains. As to expression, red blood cells.

Involved in oxygen transport from the lung to the various peripheral tissues. Functionally, hemopressin acts as an antagonist peptide of the cannabinoid receptor CNR1. Hemopressin-binding efficiently blocks cannabinoid receptor CNR1 and subsequent signaling. This is Hemoglobin subunit alpha (HBA) from Lutra lutra (European river otter).